The primary structure comprises 865 residues: DNA mismatch repair protein MutS (865 aa).

605 to 612 (GPNMAGKS) serves as a coordination point for ATP. The segment at 814 to 833 (PEPLEAYKPKGNKQPLSDEE) is disordered.

This sequence belongs to the DNA mismatch repair MutS family.

Its function is as follows. This protein is involved in the repair of mismatches in DNA. It is possible that it carries out the mismatch recognition step. This protein has a weak ATPase activity. The chain is DNA mismatch repair protein MutS from Halalkalibacterium halodurans (strain ATCC BAA-125 / DSM 18197 / FERM 7344 / JCM 9153 / C-125) (Bacillus halodurans).